The primary structure comprises 438 residues: GDP-mannose 6-dehydrogenase (438 aa).

NAD(+)-binding residues include Tyr-10, Val-11, Asp-30, Lys-35, Thr-86, and Thr-124. GDP-alpha-D-mannuronate contacts are provided by Glu-161, Lys-210, Asn-214, His-217, Asn-225, Tyr-256, Tyr-257, Arg-259, Phe-262, and Gly-265. Cys-268 is a catalytic residue. Position 271 (Lys-271) interacts with NAD(+). Lys-324 lines the GDP-alpha-D-mannuronate pocket. Arg-331 contributes to the NAD(+) binding site.

The protein belongs to the UDP-glucose/GDP-mannose dehydrogenase family.

It catalyses the reaction GDP-alpha-D-mannose + 2 NAD(+) + H2O = GDP-alpha-D-mannuronate + 2 NADH + 3 H(+). The protein operates within glycan biosynthesis; alginate biosynthesis. Functionally, catalyzes the oxidation of guanosine diphospho-D-mannose (GDP-D-mannose) to GDP-D-mannuronic acid, a precursor for alginate polymerization. The alginate layer causes a mucoid phenotype and provides a protective barrier against host immune defenses and antibiotics. The polypeptide is GDP-mannose 6-dehydrogenase (algD) (Pseudomonas syringae pv. tomato (strain ATCC BAA-871 / DC3000)).